The chain runs to 470 residues: Dihydrolipoyl dehydrogenase (470 aa).

Residues 39 to 47 (EKATLGGVC), Lys56, and Ala119 each bind FAD. Cys47 and Cys52 form a disulfide bridge. Residues 183–187 (GGGYI), Glu206, and 272–275 (TVGR) each bind NAD(+). Asp315 and Ala323 together coordinate FAD. Residue His447 is the Proton acceptor of the active site.

Belongs to the class-I pyridine nucleotide-disulfide oxidoreductase family. Homodimer. Component of two multienzyme complexes: pyruvate dehydrogenase complex and oxoglutarate dehydrogenase complex. FAD is required as a cofactor.

It localises to the cytoplasm. It catalyses the reaction N(6)-[(R)-dihydrolipoyl]-L-lysyl-[protein] + NAD(+) = N(6)-[(R)-lipoyl]-L-lysyl-[protein] + NADH + H(+). Its function is as follows. Catalyzes the oxidation of dihydrolipoamide to lipoamide. The sequence is that of Dihydrolipoyl dehydrogenase (pdhD) from Bacillus subtilis (strain 168).